A 120-amino-acid chain; its full sequence is Aspartate 1-decarboxylase (120 aa).

The Schiff-base intermediate with substrate; via pyruvic acid role is filled by serine 25. A Pyruvic acid (Ser) modification is found at serine 25. Threonine 57 is a substrate binding site. Tyrosine 58 acts as the Proton donor in catalysis. A substrate-binding site is contributed by 73–75 (GAA).

It belongs to the PanD family. As to quaternary structure, heterooctamer of four alpha and four beta subunits. Pyruvate serves as cofactor. In terms of processing, is synthesized initially as an inactive proenzyme, which is activated by self-cleavage at a specific serine bond to produce a beta-subunit with a hydroxyl group at its C-terminus and an alpha-subunit with a pyruvoyl group at its N-terminus.

The protein resides in the cytoplasm. The catalysed reaction is L-aspartate + H(+) = beta-alanine + CO2. Its pathway is cofactor biosynthesis; (R)-pantothenate biosynthesis; beta-alanine from L-aspartate: step 1/1. Catalyzes the pyruvoyl-dependent decarboxylation of aspartate to produce beta-alanine. The chain is Aspartate 1-decarboxylase from Methylibium petroleiphilum (strain ATCC BAA-1232 / LMG 22953 / PM1).